We begin with the raw amino-acid sequence, 496 residues long: Alpha-amylase (496 aa).

A disulfide bridge links C29 with C85. Ca(2+) is bound by residues N99, R155, and D164. Chloride is bound at residue R192. Residue D194 is the Nucleophile of the active site. Residue H198 coordinates Ca(2+). The Proton donor role is filled by E230. R332 is a binding site for chloride. 2 disulfide bridges follow: C374–C380 and C448–C460.

This sequence belongs to the glycosyl hydrolase 13 family. Monomer. Ca(2+) is required as a cofactor. Requires chloride as cofactor. Disulfide bonds are present.

It localises to the secreted. It catalyses the reaction Endohydrolysis of (1-&gt;4)-alpha-D-glucosidic linkages in polysaccharides containing three or more (1-&gt;4)-alpha-linked D-glucose units.. Inhibited by alpha-amylase inhibitors from wheat and rye. The most effective inhibitors are the wheat tetrameric alpha-amylase inhibitor (WTAI) and the rye dimeric alpha-amylase inhibitor (RDAI-1). Not inhibited by alpha-amylase inhibitor from barley. Functionally, aids in the digestion of starch and glycogen derived from food, such as skin scales, fungi and bacteria. The sequence is that of Alpha-amylase from Dermatophagoides pteronyssinus (European house dust mite).